The primary structure comprises 246 residues: Probable phosphatase ASA_1316 (246 aa).

Residues H8, H10, H16, H41, E74, H102, H132, D193, and H195 each contribute to the Zn(2+) site.

This sequence belongs to the PHP family. Requires Zn(2+) as cofactor.

The polypeptide is Probable phosphatase ASA_1316 (Aeromonas salmonicida (strain A449)).